A 185-amino-acid chain; its full sequence is Elongation factor P (185 aa).

This sequence belongs to the elongation factor P family.

The protein resides in the cytoplasm. Its pathway is protein biosynthesis; polypeptide chain elongation. In terms of biological role, involved in peptide bond synthesis. Stimulates efficient translation and peptide-bond synthesis on native or reconstituted 70S ribosomes in vitro. Probably functions indirectly by altering the affinity of the ribosome for aminoacyl-tRNA, thus increasing their reactivity as acceptors for peptidyl transferase. This is Elongation factor P from Deinococcus radiodurans (strain ATCC 13939 / DSM 20539 / JCM 16871 / CCUG 27074 / LMG 4051 / NBRC 15346 / NCIMB 9279 / VKM B-1422 / R1).